Here is a 261-residue protein sequence, read N- to C-terminus: CD40 ligand (261 aa).

Residues 1–22 lie on the Cytoplasmic side of the membrane; sequence MVETYHQPAPRSAATGLPVSMK. A helical; Signal-anchor for type II membrane protein membrane pass occupies residues 23–43; that stretch reads IFMYLLTVFLITQMIGSALFA. At 44–261 the chain is on the extracellular side; sequence VYLHRRLDKI…GFTSFGLLKL (218 aa). Residues 122-261 enclose the THD domain; sequence IAAHVISEAS…GFTSFGLLKL (140 aa). A disulfide bridge links C178 with C218. N-linked (GlcNAc...) asparagine glycosylation occurs at N240.

The protein belongs to the tumor necrosis factor family. Homotrimer. Interacts with CD28. CD40 ligand, soluble form: Exists as either a monomer or a homotrimer. Forms a ternary complex between CD40 and integrins for CD40-CD40LG signaling. Post-translationally, the soluble form derives from the membrane form by proteolytic processing.

The protein resides in the cell membrane. It is found in the cell surface. It localises to the secreted. Its function is as follows. Cytokine that acts as a ligand to CD40/TNFRSF5. Costimulates T-cell proliferation and cytokine production. Its cross-linking on T-cells generates a costimulatory signal which enhances the production of IL4 and IL10 in conjunction with the TCR/CD3 ligation and CD28 costimulation. Induces the activation of NF-kappa-B. Induces the activation of kinases MAPK8 and PAK2 in T-cells. Mediates B-cell proliferation in the absence of co-stimulus as well as IgE production in the presence of IL4. Involved in immunoglobulin class switching. In terms of biological role, acts as a ligand for integrins, specifically ITGA5:ITGB1 and ITGAV:ITGB3; both integrins and the CD40 receptor are required for activation of CD40-CD40LG signaling, which have cell-type dependent effects, such as B-cell activation, NF-kappa-B signaling and anti-apoptotic signaling. The protein is CD40 ligand (CD40LG) of Aotus trivirgatus (Three-striped night monkey).